A 254-amino-acid chain; its full sequence is NAD kinase (254 aa).

Aspartate 44 (proton acceptor) is an active-site residue. Residues 44-45 (DG), 114-115 (NE), aspartate 144, alanine 152, 155-160 (TAYNYS), and alanine 179 each bind NAD(+).

The protein belongs to the NAD kinase family. A divalent metal cation is required as a cofactor.

The protein resides in the cytoplasm. It catalyses the reaction NAD(+) + ATP = ADP + NADP(+) + H(+). Functionally, involved in the regulation of the intracellular balance of NAD and NADP, and is a key enzyme in the biosynthesis of NADP. Catalyzes specifically the phosphorylation on 2'-hydroxyl of the adenosine moiety of NAD to yield NADP. The sequence is that of NAD kinase from Cereibacter sphaeroides (strain ATCC 17025 / ATH 2.4.3) (Rhodobacter sphaeroides).